The sequence spans 256 residues: Imidazole glycerol phosphate synthase subunit HisF (256 aa).

Active-site residues include aspartate 11 and aspartate 130.

It belongs to the HisA/HisF family. As to quaternary structure, heterodimer of HisH and HisF.

It localises to the cytoplasm. It catalyses the reaction 5-[(5-phospho-1-deoxy-D-ribulos-1-ylimino)methylamino]-1-(5-phospho-beta-D-ribosyl)imidazole-4-carboxamide + L-glutamine = D-erythro-1-(imidazol-4-yl)glycerol 3-phosphate + 5-amino-1-(5-phospho-beta-D-ribosyl)imidazole-4-carboxamide + L-glutamate + H(+). Its pathway is amino-acid biosynthesis; L-histidine biosynthesis; L-histidine from 5-phospho-alpha-D-ribose 1-diphosphate: step 5/9. In terms of biological role, IGPS catalyzes the conversion of PRFAR and glutamine to IGP, AICAR and glutamate. The HisF subunit catalyzes the cyclization activity that produces IGP and AICAR from PRFAR using the ammonia provided by the HisH subunit. This is Imidazole glycerol phosphate synthase subunit HisF from Cupriavidus pinatubonensis (strain JMP 134 / LMG 1197) (Cupriavidus necator (strain JMP 134)).